The primary structure comprises 491 residues: Glutamyl-tRNA(Gln) amidotransferase subunit A (491 aa).

Active-site charge relay system residues include K79 and S154. The active-site Acyl-ester intermediate is S178.

The protein belongs to the amidase family. GatA subfamily. In terms of assembly, heterotrimer of A, B and C subunits.

The catalysed reaction is L-glutamyl-tRNA(Gln) + L-glutamine + ATP + H2O = L-glutaminyl-tRNA(Gln) + L-glutamate + ADP + phosphate + H(+). In terms of biological role, allows the formation of correctly charged Gln-tRNA(Gln) through the transamidation of misacylated Glu-tRNA(Gln) in organisms which lack glutaminyl-tRNA synthetase. The reaction takes place in the presence of glutamine and ATP through an activated gamma-phospho-Glu-tRNA(Gln). The protein is Glutamyl-tRNA(Gln) amidotransferase subunit A of Synechococcus sp. (strain CC9902).